The following is a 494-amino-acid chain: MKTIAFDSNKYLNLQRDHILERISQFDGKLYMEFGGKMLEDYHAARVLPGYEPDNKIKLLKELKEQVEIVIAINANNIEHSKARGDLGISYDQEVFRLIDKFNTLDIYVGSVVITQYNNQPAADAFRKQLKKNGIASYLHYPIKSYPTDINHIISSEGMGKNDYIKTSRNLIVVTAPGPGSGKLATCISQMYHDQINGVKSGYAKFETFPVWNLPLHHPVNLAYEAATADLDDVNMIDPFHLETYGKTAVNYNRDIEVFPVLNRTFERILSKSPYASPTDMGVNMVGFSIVNEEAAIEASKQEIIRRYYQTLVDFKAERVTESAVKKIELLMNDIGVTPDDRHVTVAAHQKAEQTGQPALALQLPNGQIVTGKTSELFGPTAAVIINAIKTLAKIDKTTHLIEPEYVKPIQGLKVNHLGSHNPRLHSNEILIALAITAMTSEEANLAMKELGNLKGSEAHSTVILTEEDKNVLRKLGVNITFDPVYQHHKLYRK.

This sequence belongs to the UPF0371 family.

This chain is UPF0371 protein M28_Spy1076, found in Streptococcus pyogenes serotype M28 (strain MGAS6180).